Reading from the N-terminus, the 261-residue chain is Putative ankyrin repeat protein L99 (261 aa).

7 ANK repeats span residues lysine 21 to alanine 50, histidine 51 to serine 80, aspartate 81 to alanine 110, glutamine 112 to alanine 140, asparagine 142 to alanine 170, aspartate 171 to cysteine 203, and asparagine 231 to serine 259.

This is Putative ankyrin repeat protein L99 from Acanthamoeba polyphaga (Amoeba).